A 251-amino-acid chain; its full sequence is Anamorsin homolog (251 aa).

The interval 1 to 154 (MINFSNTLVI…AENPDFNKSD (154 aa)) is N-terminal SAM-like domain. Positions 155-167 (DDNNLVSSDEEIY) are linker. C170, C181, C184, and C186 together coordinate [2Fe-2S] cluster. A fe-S binding site A region spans residues 170 to 186 (CEDKKKVVNRVCDNCTC). [4Fe-4S] cluster-binding residues include C216, C219, C227, and C230. 2 short sequence motifs (cx2C motif) span residues 216–219 (CGNC) and 227–230 (CGSC). The fe-S binding site B stretch occupies residues 216–230 (CGNCYLGDAFRCGSC).

It belongs to the anamorsin family. Monomer. The cofactor is [2Fe-2S] cluster. [4Fe-4S] cluster serves as cofactor.

The protein localises to the cytoplasm. The protein resides in the mitochondrion intermembrane space. In terms of biological role, component of the cytosolic iron-sulfur (Fe-S) protein assembly (CIA) machinery. Required for the maturation of extramitochondrial Fe-S proteins. Part of an electron transfer chain functioning in an early step of cytosolic Fe-S biogenesis, facilitating the de novo assembly of a [4Fe-4S] cluster on the cytosolic Fe-S scaffold complex. Electrons are transferred from NADPH via a FAD- and FMN-containing diflavin oxidoreductase. Together with the diflavin oxidoreductase, also required for the assembly of the diferric tyrosyl radical cofactor of ribonucleotide reductase (RNR), probably by providing electrons for reduction during radical cofactor maturation in the catalytic small subunit. This Plasmodium yoelii yoelii protein is Anamorsin homolog.